The sequence spans 273 residues: Ribosomal RNA small subunit methyltransferase A (273 aa).

S-adenosyl-L-methionine contacts are provided by Asn-18, Leu-20, Gly-45, Glu-66, Asp-91, and Asn-113.

It belongs to the class I-like SAM-binding methyltransferase superfamily. rRNA adenine N(6)-methyltransferase family. RsmA subfamily.

It is found in the cytoplasm. It carries out the reaction adenosine(1518)/adenosine(1519) in 16S rRNA + 4 S-adenosyl-L-methionine = N(6)-dimethyladenosine(1518)/N(6)-dimethyladenosine(1519) in 16S rRNA + 4 S-adenosyl-L-homocysteine + 4 H(+). Functionally, specifically dimethylates two adjacent adenosines (A1518 and A1519) in the loop of a conserved hairpin near the 3'-end of 16S rRNA in the 30S particle. May play a critical role in biogenesis of 30S subunits. The sequence is that of Ribosomal RNA small subunit methyltransferase A from Escherichia fergusonii (strain ATCC 35469 / DSM 13698 / CCUG 18766 / IAM 14443 / JCM 21226 / LMG 7866 / NBRC 102419 / NCTC 12128 / CDC 0568-73).